The primary structure comprises 147 residues: Large ribosomal subunit protein uL13 (147 aa).

This sequence belongs to the universal ribosomal protein uL13 family. In terms of assembly, part of the 50S ribosomal subunit.

Its function is as follows. This protein is one of the early assembly proteins of the 50S ribosomal subunit, although it is not seen to bind rRNA by itself. It is important during the early stages of 50S assembly. This Rhodococcus opacus (strain B4) protein is Large ribosomal subunit protein uL13.